The primary structure comprises 373 residues: Quinolinate synthase (373 aa).

Positions 46 and 63 each coordinate iminosuccinate. Cysteine 109 provides a ligand contact to [4Fe-4S] cluster. Iminosuccinate-binding positions include 142–144 and serine 163; that span reads YMN. Cysteine 232 provides a ligand contact to [4Fe-4S] cluster. Residues 258–260 and threonine 275 each bind iminosuccinate; that span reads HPE. Cysteine 324 is a [4Fe-4S] cluster binding site.

The protein belongs to the quinolinate synthase family. Type 3 subfamily. [4Fe-4S] cluster is required as a cofactor.

It is found in the cytoplasm. It catalyses the reaction iminosuccinate + dihydroxyacetone phosphate = quinolinate + phosphate + 2 H2O + H(+). Its pathway is cofactor biosynthesis; NAD(+) biosynthesis; quinolinate from iminoaspartate: step 1/1. Its function is as follows. Catalyzes the condensation of iminoaspartate with dihydroxyacetone phosphate to form quinolinate. The polypeptide is Quinolinate synthase (Acidobacterium capsulatum (strain ATCC 51196 / DSM 11244 / BCRC 80197 / JCM 7670 / NBRC 15755 / NCIMB 13165 / 161)).